A 28-amino-acid chain; its full sequence is Probable small spore coat assembly protein B (28 aa).

Residues 4–24 (VFAGGFALLVVLFILLIIIGA) form a helical membrane-spanning segment.

The protein belongs to the SscA family.

The protein localises to the membrane. The protein is Probable small spore coat assembly protein B of Bacillus subtilis (strain 168).